The primary structure comprises 98 residues: Co-chaperonin GroES 1 (98 aa).

The protein belongs to the GroES chaperonin family. As to quaternary structure, heptamer of 7 subunits arranged in a ring. Interacts with the chaperonin GroEL.

The protein localises to the cytoplasm. Its function is as follows. Together with the chaperonin GroEL, plays an essential role in assisting protein folding. The GroEL-GroES system forms a nano-cage that allows encapsulation of the non-native substrate proteins and provides a physical environment optimized to promote and accelerate protein folding. GroES binds to the apical surface of the GroEL ring, thereby capping the opening of the GroEL channel. The chain is Co-chaperonin GroES 1 from Rhodopseudomonas palustris (strain ATCC BAA-98 / CGA009).